Consider the following 25-residue polypeptide: KEICFPRLGCFSDDAPWAGIAQRPL.

The cysteines at positions 4 and 10 are disulfide-linked.

It belongs to the AB hydrolase superfamily. Lipase family. Forms a 1:1 stoichiometric complex with (pro)colipase/CLPS.

It is found in the secreted. It catalyses the reaction a triacylglycerol + H2O = a diacylglycerol + a fatty acid + H(+). The catalysed reaction is 1,2,3-tributanoylglycerol + H2O = dibutanoylglycerol + butanoate + H(+). The enzyme catalyses 1,2,3-tri-(9Z-octadecenoyl)-glycerol + H2O = di-(9Z)-octadecenoylglycerol + (9Z)-octadecenoate + H(+). It carries out the reaction all-trans-retinyl hexadecanoate + H2O = all-trans-retinol + hexadecanoate + H(+). It catalyses the reaction 1,2-di-(9Z-octadecenoyl)-glycerol + H2O = (9Z-octadecenoyl)-glycerol + (9Z)-octadecenoate + H(+). Its activity is regulated as follows. Inhibited by bile salts, is reactivated by (pro)colipase/CLPS. Its function is as follows. Plays an important role in fat metabolism. It preferentially splits the esters of long-chain fatty acids at positions 1 and 3, producing mainly 2-monoacylglycerol and free fatty acids, and shows considerably higher activity against insoluble emulsified substrates than against soluble ones. This chain is Pancreatic triacylglycerol lipase (PNLIP), found in Felis catus (Cat).